We begin with the raw amino-acid sequence, 90 residues long: Keratin-associated protein 19-1 (90 aa).

Residues 5 to 84 (GSYYGGLGYS…CCRPSYNGGY (80 aa)) are 26 X 2 AA repeats of G-[YCGS].

The protein belongs to the KRTAP type 19 family. Interacts with hair keratins. Detected in the upper portion of the hair cortex.

In the hair cortex, hair keratin intermediate filaments are embedded in an interfilamentous matrix, consisting of hair keratin-associated proteins (KRTAP), which are essential for the formation of a rigid and resistant hair shaft through their extensive disulfide bond cross-linking with abundant cysteine residues of hair keratins. The matrix proteins include the high-sulfur and high-glycine-tyrosine keratins. The polypeptide is Keratin-associated protein 19-1 (KRTAP19-1) (Homo sapiens (Human)).